Consider the following 142-residue polypeptide: MQHARKKFRVGRTSAHNRCMLANMLKSLIHQERIETTLPKAKELRRCADKMITLAKKNTLAARRLAVARLMVRYNKLTSKEARQAKAGDLSAYNVDRTVINKLFDQLGTRFVSRNGGYTRILKLQNRVGDNARKCIIEFLAD.

The protein belongs to the bacterial ribosomal protein bL17 family. In terms of assembly, part of the 50S ribosomal subunit. Contacts protein L32.

The polypeptide is Large ribosomal subunit protein bL17 (Chlamydia caviae (strain ATCC VR-813 / DSM 19441 / 03DC25 / GPIC) (Chlamydophila caviae)).